A 418-amino-acid chain; its full sequence is Trans-acting enoyl reductase (418 aa).

It belongs to the saccharopine dehydrogenase family. Enoyl reductase subfamily.

Functionally, involved in the reduction of the double bond between C-4 and C-5 during phthiocerol dimycocerosates (DIM A) and glycosylated phenolphthiocerol dimycocerosates (PGL) biosynthesis. The protein is Trans-acting enoyl reductase of Mycobacterium tuberculosis (strain ATCC 25177 / H37Ra).